The chain runs to 200 residues: Rho-related protein racH (200 aa).

11–18 (GDMSVGKT) is a binding site for GTP. Residues 33–41 (YVPTVFDNY) carry the Effector region motif. GTP contacts are provided by residues 58-62 (DTAGS) and 117-120 (TKLD). A disordered region spans residues 178-200 (EELAKSKKDSKKGDKDSKDCIIQ). Cysteine 197 is modified (cysteine methyl ester). Cysteine 197 is lipidated: S-geranylgeranyl cysteine. Positions 198–200 (IIQ) are cleaved as a propeptide — removed in mature form.

Belongs to the small GTPase superfamily. Rho family.

The protein localises to the cell membrane. The sequence is that of Rho-related protein racH (racH) from Dictyostelium discoideum (Social amoeba).